We begin with the raw amino-acid sequence, 368 residues long: Ferrochelatase (368 aa).

The Fe cation site is built by histidine 209 and glutamate 290. Residues 341 to 368 (ADLGGGREATGQAAERSRQRALALGAKQ) form a disordered region.

This sequence belongs to the ferrochelatase family.

The protein resides in the cytoplasm. It catalyses the reaction heme b + 2 H(+) = protoporphyrin IX + Fe(2+). It participates in porphyrin-containing compound metabolism; protoheme biosynthesis; protoheme from protoporphyrin-IX: step 1/1. Its function is as follows. Catalyzes the ferrous insertion into protoporphyrin IX. In Nitrosococcus oceani (strain ATCC 19707 / BCRC 17464 / JCM 30415 / NCIMB 11848 / C-107), this protein is Ferrochelatase.